Here is a 757-residue protein sequence, read N- to C-terminus: Relaxin receptor 1 (757 aa).

Residues 1–408 are Extracellular-facing; sequence MTSGSVFFYI…LENLLASIIQ (408 aa). The 38-residue stretch at 26-63 folds into the LDL-receptor class A domain; sequence KCSLGYFPCGNITKCLPQLLHCNGVDDCGNQADEDNCG. 3 cysteine pairs are disulfide-bonded: Cys27-Cys40, Cys34-Cys53, and Cys47-Cys62. Asn36 carries an N-linked (GlcNAc...) asparagine glycan. Ca(2+) is bound by residues Leu45, Asn48, Val50, Asp52, Asp58, and Glu59. Residues 91 to 127 form the LRRNT domain; sequence ETPECLVGSVPVQCLCRGLELDCDETNLRAVPSVSSN. Asn127 carries an N-linked (GlcNAc...) asparagine glycan. LRR repeat units lie at residues 151–172, 175–196, 199–220, 223–244, 248–269, 272–293, 296–317, 320–341, and 344–365; these read DLQK…AFRG, SLTK…VFED, RLEW…TFYG, SLIL…PLCQ, RLHW…TLIS, NLTV…TFAP, KLDE…IFKD, ELSQ…QFDY, and KLKS…MFRP. N-linked (GlcNAc...) asparagine glycosylation is found at Asn264 and Asn272. A glycan (N-linked (GlcNAc...) asparagine) is linked at Asn325. A glycan (N-linked (GlcNAc...) asparagine) is linked at Asn368. A helical membrane pass occupies residues 409-429; the sequence is RVFVWVVSAVTCFGNVFVICM. Residues 430 to 443 are Cytoplasmic-facing; sequence RPYIRSENKLYAMS. Residues 444–464 traverse the membrane as a helical segment; it reads IISLCCADCLMGIYLFVIGGF. Over 465–486 the chain is Extracellular; it reads DLKFRGEYNKHAQLWMESTHCQ. A disulfide bridge connects residues Cys485 and Cys563. Residues 487 to 507 form a helical membrane-spanning segment; the sequence is LVGSLAILSTEVSVLLLTFLT. Residues 508-527 lie on the Cytoplasmic side of the membrane; sequence LEKYICIVYPFRCVRPGKCR. Residues 528–548 traverse the membrane as a helical segment; it reads TITVLILIWITGFIVAFIPLS. Residues 549–577 lie on the Extracellular side of the membrane; it reads NKEFFKNYYGTNGVCFPLHSEDTESIGAQ. The chain crosses the membrane as a helical span at residues 578 to 598; it reads VYSVAIFLGINLAAFIIIVFS. Residues 599-629 are Cytoplasmic-facing; the sequence is YGSMFYSVHQSAITATEIRNQVKKEMILAKR. The helical transmembrane segment at 630-650 threads the bilayer; sequence FFFIVFTDALCWIPIFVVKFL. Residues 651 to 660 lie on the Extracellular side of the membrane; it reads SLLQVEIPGT. A helical membrane pass occupies residues 661 to 681; the sequence is ITSWVVIFILPINSALNPILY. Residues 682 to 757 lie on the Cytoplasmic side of the membrane; sequence TLTTRPFKEM…SQSTRLNSYS (76 aa).

Belongs to the G-protein coupled receptor 1 family. Interacts with C1QTNF8.

It is found in the cell membrane. Functionally, receptor for relaxins. The activity of this receptor is mediated by G proteins leading to stimulation of adenylate cyclase and an increase of cAMP. Binding of the ligand may also activate a tyrosine kinase pathway that inhibits the activity of a phosphodiesterase that degrades cAMP. The polypeptide is Relaxin receptor 1 (RXFP1) (Pongo abelii (Sumatran orangutan)).